Reading from the N-terminus, the 282-residue chain is Cuticle collagen 8 (282 aa).

Residues M1–S24 form the signal peptide. A disordered region spans residues G86–A282. 2 triple-helical region regions span residues G95 to I124 and G141 to D269. Gly residues predominate over residues T170 to G180. Residues P214–E224 are compositionally biased toward pro residues. Gly residues predominate over residues G225 to G234. Positions N235–V244 are enriched in low complexity.

The protein belongs to the cuticular collagen family. As to quaternary structure, collagen polypeptide chains are complexed within the cuticle by disulfide bonds and other types of covalent cross-links.

In terms of biological role, nematode cuticles are composed largely of collagen-like proteins. The cuticle functions both as an exoskeleton and as a barrier to protect the worm from its environment. The chain is Cuticle collagen 8 (col-8) from Caenorhabditis elegans.